The primary structure comprises 425 residues: Histidine--tRNA ligase (425 aa).

The protein belongs to the class-II aminoacyl-tRNA synthetase family. Homodimer.

Its subcellular location is the cytoplasm. The catalysed reaction is tRNA(His) + L-histidine + ATP = L-histidyl-tRNA(His) + AMP + diphosphate + H(+). The sequence is that of Histidine--tRNA ligase from Listeria innocua serovar 6a (strain ATCC BAA-680 / CLIP 11262).